The following is a 455-amino-acid chain: Protein 60A (455 aa).

An N-terminal signal peptide occupies residues 1 to 36 (MSGLRNTSEAVAVLASLGLGMVLLMFVATTPPAVEA). Residues 37 to 335 (TQSGIYIDNG…SASHPRKRKK (299 aa)) constitute a propeptide that is removed on maturation. A compositionally biased stretch (acidic residues) spans 108-118 (GLSDQDEDDDY). Positions 108-138 (GLSDQDEDDDYERGHRSRRSADLEEDEGEQQ) are disordered. Residues asparagine 238 and asparagine 250 are each glycosylated (N-linked (GlcNAc...) asparagine). The tract at residues 316-345 (AHSSHHRSKRSASHPRKRKKSVSPNNVPLL) is disordered. The segment covering 318 to 336 (SSHHRSKRSASHPRKRKKS) has biased composition (basic residues). 3 disulfides stabilise this stretch: cysteine 354-cysteine 420, cysteine 383-cysteine 452, and cysteine 387-cysteine 454. N-linked (GlcNAc...) asparagine glycosylation is present at asparagine 396.

Belongs to the TGF-beta family. In terms of assembly, homodimer; disulfide-linked. Interacts with nord and dpp. As to expression, expressed in cells of the developing foregut and hindgut during germ band retraction and later embryonic stages. Expressed in the wing disk, mainly in the posterior compartment in the pteropleural and medial regions extending into the progenitors of the scutellum. High levels are found within the posterior and anterior compartments of the wing pouch and low levels in the hinge region. In the eye/antennal disk, expression is highest anterior to the morphogenetic furrow and in the medial regions with lower levels of expression posterior to the morphogenetic furrow. Expressed throughout the posterior compartment of the leg imaginal disks and within the ventral anterior compartment.

It localises to the secreted. Required for the growth of imaginal tissues and for patterning of the adult wing. In Drosophila melanogaster (Fruit fly), this protein is Protein 60A (gbb).